The following is a 460-amino-acid chain: UDP-glycosyltransferase 74B1 (460 aa).

Histidine 22 serves as the catalytic Proton acceptor. Histidine 22 provides a ligand contact to an anthocyanidin. The active-site Charge relay is the aspartate 113. Residues threonine 135, glutamine 339, histidine 354, tryptophan 357, asparagine 358, serine 359, glutamate 362, aspartate 378, and glutamine 379 each coordinate UDP-alpha-D-glucose.

This sequence belongs to the UDP-glycosyltransferase family. As to expression, expressed in the vasculature, the apical meristems of roots, shoots and inflorescence, and the junction of organ or branches.

It carries out the reaction (Z)-2-phenyl-1-thioacetohydroximate + UDP-alpha-D-glucose = (Z)-desulfoglucotropeolin + UDP. It catalyses the reaction a (Z)-omega-(methylsulfanyl)alkyl-thiohydroximate + UDP-alpha-D-glucose = an aliphatic (Z)-desulfo-glucosinolate + UDP. The enzyme catalyses (Z)-2-(indol-3-yl)-1-thioacetohydroximate + UDP-alpha-D-glucose = (Z)-indolylmethyl desulfoglucosinolate + UDP. In terms of biological role, involved in the biosynthesis of glucosinolate. In in vitro assay, may use phenylacetothiohydroximate (PATH), but not phenylacetic acid (PAA), indole-3-acetic acid (IAA) or salicylic acid (SA) as substrate. Specific for the thiohydroximate functional group and does not glucosylate the carboxylate group or a hydroxyl group. The polypeptide is UDP-glycosyltransferase 74B1 (UGT74B1) (Arabidopsis thaliana (Mouse-ear cress)).